The sequence spans 377 residues: MATNNNNNNGNPILRSLETSCCFLATLFPKVFCTLVLTWSLYVLLFIIPNYIKSSLNSTILNIIGITLYVLCIISYYKIILIGPGSPLDYPELRINDLNRMINENPYNNNNNDEEPGDLPPESMIIHTMKVNGNQGYRYCTKCSVWKPDRSHHCSSSGKCILKMDHYCPWFSTCIGFHNYKFFIQFLSYVAIYCWFLFIISGKILYNFITEGLFEDEILSLNLVAVLILSFAFAIAVSVFAMFSIYLCCKNLTTIEFQEKRWNYRGQANDERFNYEFDNNGKRKKINTNIFDLGIMENWKSVMGPNWITWILPITVTVTANTKSMISQDEFNNGVNFKVNEEIYAKYLHNAELQQQLNQQLSSYKDRLRRERQANIV.

At 1-31 (MATNNNNNNGNPILRSLETSCCFLATLFPKV) the chain is on the cytoplasmic side. Residues 32–52 (FCTLVLTWSLYVLLFIIPNYI) form a helical membrane-spanning segment. The Lumenal segment spans residues 53–62 (KSSLNSTILN). A helical membrane pass occupies residues 63–83 (IIGITLYVLCIISYYKIILIG). Residues 84-181 (PGSPLDYPEL…STCIGFHNYK (98 aa)) are Cytoplasmic-facing. Positions 138-188 (RYCTKCSVWKPDRSHHCSSSGKCILKMDHYCPWFSTCIGFHNYKFFIQFLS) constitute a DHHC domain. C168 (S-palmitoyl cysteine intermediate) is an active-site residue. Residues 182–202 (FFIQFLSYVAIYCWFLFIISG) form a helical membrane-spanning segment. Over 203–222 (KILYNFITEGLFEDEILSLN) the chain is Lumenal. The helical transmembrane segment at 223–243 (LVAVLILSFAFAIAVSVFAMF) threads the bilayer. Over 244 to 377 (SIYLCCKNLT…LRRERQANIV (134 aa)) the chain is Cytoplasmic.

The protein belongs to the DHHC palmitoyltransferase family. PFA3 subfamily. Post-translationally, autopalmitoylated.

It is found in the vacuole membrane. It carries out the reaction L-cysteinyl-[protein] + hexadecanoyl-CoA = S-hexadecanoyl-L-cysteinyl-[protein] + CoA. Palmitoyltransferase specific for VAC8. Palmitoylates VAC8 at one or more of its N-terminal cysteine residues, which is required for its proper membrane localization. This chain is Palmitoyltransferase PFA3 (PFA3), found in Candida albicans (strain SC5314 / ATCC MYA-2876) (Yeast).